The primary structure comprises 313 residues: Malate dehydrogenase (313 aa).

NAD(+) is bound by residues 11–16 (GAGSIG) and D35. 2 residues coordinate substrate: R84 and R90. Residues N97 and 120 to 122 (VTN) contribute to the NAD(+) site. Residues N122 and R153 each coordinate substrate. H177 acts as the Proton acceptor in catalysis.

It belongs to the LDH/MDH superfamily. MDH type 3 family.

It carries out the reaction (S)-malate + NAD(+) = oxaloacetate + NADH + H(+). Functionally, catalyzes the reversible oxidation of malate to oxaloacetate. This chain is Malate dehydrogenase, found in Ehrlichia chaffeensis (strain ATCC CRL-10679 / Arkansas).